A 245-amino-acid chain; its full sequence is 1-(5-phosphoribosyl)-5-[(5-phosphoribosylamino)methylideneamino] imidazole-4-carboxamide isomerase (245 aa).

Asp7 serves as the catalytic Proton acceptor. Asp129 acts as the Proton donor in catalysis.

This sequence belongs to the HisA/HisF family.

It localises to the cytoplasm. The enzyme catalyses 1-(5-phospho-beta-D-ribosyl)-5-[(5-phospho-beta-D-ribosylamino)methylideneamino]imidazole-4-carboxamide = 5-[(5-phospho-1-deoxy-D-ribulos-1-ylimino)methylamino]-1-(5-phospho-beta-D-ribosyl)imidazole-4-carboxamide. It functions in the pathway amino-acid biosynthesis; L-histidine biosynthesis; L-histidine from 5-phospho-alpha-D-ribose 1-diphosphate: step 4/9. In Escherichia coli O17:K52:H18 (strain UMN026 / ExPEC), this protein is 1-(5-phosphoribosyl)-5-[(5-phosphoribosylamino)methylideneamino] imidazole-4-carboxamide isomerase.